The following is a 357-amino-acid chain: Adenosine deaminase (357 aa).

2 residues coordinate Zn(2+): histidine 16 and histidine 18. Residues histidine 18, aspartate 20, and glycine 185 each contribute to the substrate site. Histidine 212 is a binding site for Zn(2+). Glutamate 215 functions as the Proton donor in the catalytic mechanism. Aspartate 294 contacts Zn(2+). Aspartate 295 serves as a coordination point for substrate.

The protein belongs to the metallo-dependent hydrolases superfamily. Adenosine and AMP deaminases family. It depends on Zn(2+) as a cofactor.

The protein resides in the cell membrane. It is found in the cell junction. The protein localises to the cytoplasmic vesicle lumen. It localises to the cytoplasm. Its subcellular location is the lysosome. The catalysed reaction is adenosine + H2O + H(+) = inosine + NH4(+). It catalyses the reaction 2'-deoxyadenosine + H2O + H(+) = 2'-deoxyinosine + NH4(+). Functionally, catalyzes the hydrolytic deamination of adenosine and 2-deoxyadenosine. Plays an important role in purine metabolism and in adenosine homeostasis. Modulates signaling by extracellular adenosine, and so contributes indirectly to cellular signaling events. May act as a positive regulator of T-cell coactivation. The polypeptide is Adenosine deaminase (ADA) (Gallus gallus (Chicken)).